Reading from the N-terminus, the 625-residue chain is BTB/POZ domain-containing protein At5g48130 (625 aa).

The 65-residue stretch at 41–105 folds into the BTB domain; that stretch reads ASVHVRVCNK…IYGCPTLIHP (65 aa). Residues 217-469 enclose the NPH3 domain; that stretch reads DTWIKDLTDL…VQALFIQQLN (253 aa). Residues 494 to 507 are compositionally biased toward polar residues; it reads VPSSRPLTSQQSPC. A disordered region spans residues 494–513; the sequence is VPSSRPLTSQQSPCTDDETG.

It belongs to the NPH3 family.

It participates in protein modification; protein ubiquitination. Its function is as follows. May act as a substrate-specific adapter of an E3 ubiquitin-protein ligase complex (CUL3-RBX1-BTB) which mediates the ubiquitination and subsequent proteasomal degradation of target proteins. The polypeptide is BTB/POZ domain-containing protein At5g48130 (Arabidopsis thaliana (Mouse-ear cress)).